The sequence spans 684 residues: Cleavage and polyadenylation specificity factor subunit 3 (684 aa).

Ser-2 carries the post-translational modification N-acetylserine. Zn(2+) is bound by residues His-71, His-73, Asp-75, His-76, His-158, and Asp-179. His-396 (proton donor) is an active-site residue. Position 418 (His-418) interacts with Zn(2+). Residues Lys-462, Lys-465, and Lys-545 each participate in a glycyl lysine isopeptide (Lys-Gly) (interchain with G-Cter in SUMO) cross-link. At Ser-659 the chain carries Phosphoserine. Phosphothreonine is present on Thr-681.

This sequence belongs to the metallo-beta-lactamase superfamily. RNA-metabolizing metallo-beta-lactamase-like family. CPSF3 subfamily. In terms of assembly, component of the cleavage and polyadenylation specificity factor (CPSF) complex, composed of CPSF1, CPSF2, CPSF3, CPSF4 and FIP1L1. Interacts with CPSF2, CSTF2 and SYMPK. Interacts with TUT1; the interaction is direct and mediates the recruitment of the CPSF complex on the 3'UTR of pre-mRNAs. Interacts with WDR33. Interacts with ZC3H3. Interacts with ISY1; this interaction is in an RNA independent manner. Interacts with the microprocessor complex subunits DGCR8 and DROSHA; this interaction is in an RNA dependent manner. It depends on Zn(2+) as a cofactor. Sumoylated on Lys-462, Lys-465 and Lys-545, preferentially by SUMO3.

The protein localises to the nucleus. Its function is as follows. Component of the cleavage and polyadenylation specificity factor (CPSF) complex that plays a key role in pre-mRNA 3'-end formation, recognizing the AAUAAA signal sequence and interacting with poly(A) polymerase and other factors to bring about cleavage and poly(A) addition. Has endonuclease activity, and functions as an mRNA 3'-end-processing endonuclease. Also involved in the histone 3'-end pre-mRNA processing. U7 snRNP-dependent protein that induces both the 3' endoribonucleolytic cleavage of histone pre-mRNAs and acts as a 5' to 3' exonuclease for degrading the subsequent downstream cleavage product (DCP) of mature histone mRNAs. Cleavage occurs after the 5'-ACCCA-3' sequence in the histone pre-mRNA leaving a 3'hydroxyl group on the upstream fragment containing the stem loop (SL) and 5' phosphate on the downstream cleavage product (DCP) starting with CU nucleotides. The U7-dependent 5' to 3' exonuclease activity is processive and degrades the DCP RNA substrate even after complete removal of the U7-binding site. Binds to the downstream cleavage product (DCP) of histone pre-mRNAs and the cleaved DCP RNA substrate in a U7 snRNP dependent manner. Required for the selective processing of microRNAs (miRNAs) during embryonic stem cell differentiation via its interaction with ISY1. Required for entering/progressing through S-phase of the cell cycle. Required for the biogenesis of all miRNAs from the pri-miR-17-92 primary transcript except miR-92a. Only required for the biogenesis of miR-290 and miR-96 from the pri-miR-290-295 and pri-miR-96-183 primary transcripts, respectively. The protein is Cleavage and polyadenylation specificity factor subunit 3 (Cpsf3) of Mus musculus (Mouse).